Consider the following 454-residue polypeptide: uncharacterized protein (454 aa).

Residues 364 to 405 (CSRPGCDAPAYHSEVHHVTPWTTTHRTDINDLTLACGPDNRL) enclose the HNH domain.

The protein belongs to the Rv1128c/1148c/1588c/1702c/1945/3466 family.

This is an uncharacterized protein from Mycobacterium tuberculosis (strain ATCC 25618 / H37Rv).